Here is a 673-residue protein sequence, read N- to C-terminus: Armadillo repeat-containing protein 8 (673 aa).

At alanine 2 the chain carries N-acetylalanine. ARM repeat units lie at residues 51–92 (NKQK…SLAM), 95–134 (ENNV…TIFT), 138–176 (TPEE…HCCK), 178–217 (PDHQ…VLAF), 224–265 (MTLV…YMCR), 269–309 (IRTD…YLIE), 313–352 (ELQR…HDLK), 374–413 (DIRK…SLSR), 416–455 (QQLR…NLLL), 458–497 (SPSK…NTAF), 501–540 (QKIK…NLLS), 543–585 (PHID…NIAD), 588–627 (TAKD…NLIW), and 634–673 (QERQ…QYLA). Serine 337 is modified (phosphoserine). Position 512 is a phosphoserine (serine 512).

Identified in the CTLH complex that contains GID4, RANBP9 and/or RANBP10, MKLN1, MAEA, RMND5A (or alternatively its paralog RMND5B), GID8, ARMC8, WDR26 and YPEL5. Within this complex, MAEA, RMND5A (or alternatively its paralog RMND5B), GID8, WDR26, and RANBP9 and/or RANBP10 form the catalytic core, while GID4, MKLN1, ARMC8 and YPEL5 have ancillary roles.

The protein resides in the nucleus. Its subcellular location is the cytoplasm. In terms of biological role, component of the CTLH E3 ubiquitin-protein ligase complex that selectively accepts ubiquitin from UBE2H and mediates ubiquitination and subsequent proteasomal degradation of the transcription factor HBP1. This Pongo abelii (Sumatran orangutan) protein is Armadillo repeat-containing protein 8 (ARMC8).